The sequence spans 319 residues: MKQVTGFAPASVGNVACGFDVLGFALTEPGDEVTVSFTDDENSPAQVIISKIIGDGGALPTDPYKNTASIVVIKFLEFLKTHKGIEQSGTFSIELKKNLPLSSGMGSSASSAAAALIAANSLLGSPCTKMELVPFVMEGERIACGSIHADNAAPAMLGNFILTRSYDPLDLIPISTPPELYCSLVHPHIEVPTSHARSILKKEIALSSAVRQWGNVGALVAGLLRCDYELIGRALEDVVAEPVRAPLIPGFYDVKHAALDAGALGGSIAGSGPSIFAFSDSLAKAETIAKAMQETFRKVSNLESDIWFCPVSREGSRIL.

100 to 110 is an ATP binding site; it reads PLSSGMGSSAS.

The protein belongs to the GHMP kinase family. Homoserine kinase subfamily.

It localises to the cytoplasm. The catalysed reaction is L-homoserine + ATP = O-phospho-L-homoserine + ADP + H(+). It participates in amino-acid biosynthesis; L-threonine biosynthesis; L-threonine from L-aspartate: step 4/5. Catalyzes the ATP-dependent phosphorylation of L-homoserine to L-homoserine phosphate. The protein is Homoserine kinase of Chloroherpeton thalassium (strain ATCC 35110 / GB-78).